Consider the following 408-residue polypeptide: Aminoacylase-1A (408 aa).

Position 80 (His-80) interacts with Zn(2+). Residue Asp-82 is part of the active site. A Zn(2+)-binding site is contributed by Asp-113. Catalysis depends on Glu-147, which acts as the Proton acceptor. Zn(2+)-binding residues include Glu-148, Glu-175, and His-373. Ser-408 carries the post-translational modification Phosphoserine.

It belongs to the peptidase M20A family. Homodimer. It depends on Zn(2+) as a cofactor. The N-terminus is blocked.

The protein resides in the cytoplasm. It catalyses the reaction an N-acyl-L-amino acid + H2O = an L-alpha-amino acid + a carboxylate. The enzyme catalyses an N-acetyl-L-cysteine-S-conjugate + H2O = an S-substituted L-cysteine + acetate. Its function is as follows. Involved in the hydrolysis of N-acylated or N-acetylated amino acids (except L-aspartate). This Rattus norvegicus (Rat) protein is Aminoacylase-1A (Acy1a).